The primary structure comprises 503 residues: Probable cytosol aminopeptidase (503 aa).

K270 and D275 together coordinate Mn(2+). K282 is a catalytic residue. 3 residues coordinate Mn(2+): D293, D352, and E354. R356 is an active-site residue.

Belongs to the peptidase M17 family. Mn(2+) is required as a cofactor.

The protein resides in the cytoplasm. The catalysed reaction is Release of an N-terminal amino acid, Xaa-|-Yaa-, in which Xaa is preferably Leu, but may be other amino acids including Pro although not Arg or Lys, and Yaa may be Pro. Amino acid amides and methyl esters are also readily hydrolyzed, but rates on arylamides are exceedingly low.. It catalyses the reaction Release of an N-terminal amino acid, preferentially leucine, but not glutamic or aspartic acids.. Its function is as follows. Presumably involved in the processing and regular turnover of intracellular proteins. Catalyzes the removal of unsubstituted N-terminal amino acids from various peptides. This is Probable cytosol aminopeptidase from Shigella flexneri.